Reading from the N-terminus, the 498-residue chain is Putative antiporter subunit mnhD2 (498 aa).

Helical transmembrane passes span 2-22, 32-52, 78-98, 108-128, 130-150, 161-181, 209-229, 240-260, 271-291, 308-328, 330-350, 368-388, 403-423, and 450-470; these read LSNL…ILVF, YLYL…LIYV, LSLI…AYGF, YHLP…FLTS, LFNL…LITL, IIYV…IGLL, ISLI…FMWL, LAAL…IRFF, IHPL…IGVI, IGFI…GAIF, LVND…LVYI, FFGV…PFSG, GNYI…YSLF, and GILS…PVLL.

It belongs to the CPA3 antiporters (TC 2.A.63) subunit D family. May form a heterooligomeric complex that consists of seven subunits: mnhA2, mnhB2, mnhC2, mnhD2, mnhE2, mnhF2 and mnhG2.

The protein localises to the cell membrane. This Staphylococcus aureus (strain MRSA252) protein is Putative antiporter subunit mnhD2 (mnhD2).